Here is a 452-residue protein sequence, read N- to C-terminus: Bifunctional protein GlmU (452 aa).

Positions 1–226 (MSLHIIILAA…LHEVEGVNNR (226 aa)) are pyrophosphorylase. Residues 8 to 11 (LAAG), Lys-22, Gln-73, 78 to 79 (GT), 100 to 102 (YGD), Gly-136, Glu-151, Asn-166, and Asn-224 contribute to the UDP-N-acetyl-alpha-D-glucosamine site. Asp-102 contributes to the Mg(2+) binding site. Position 224 (Asn-224) interacts with Mg(2+). Positions 227–247 (IQLAALERAYQQQVAEELMLA) are linker. Residues 248–452 (GATLRDPARV…IDGWTRPVKK (205 aa)) form an N-acetyltransferase region. UDP-N-acetyl-alpha-D-glucosamine-binding residues include Arg-330 and Lys-348. His-360 serves as the catalytic Proton acceptor. Positions 363 and 374 each coordinate UDP-N-acetyl-alpha-D-glucosamine. Residues Ala-377, 383 to 384 (NY), Ser-402, Ala-420, and Arg-437 each bind acetyl-CoA.

This sequence in the N-terminal section; belongs to the N-acetylglucosamine-1-phosphate uridyltransferase family. It in the C-terminal section; belongs to the transferase hexapeptide repeat family. In terms of assembly, homotrimer. Mg(2+) is required as a cofactor.

The protein resides in the cytoplasm. It carries out the reaction alpha-D-glucosamine 1-phosphate + acetyl-CoA = N-acetyl-alpha-D-glucosamine 1-phosphate + CoA + H(+). The enzyme catalyses N-acetyl-alpha-D-glucosamine 1-phosphate + UTP + H(+) = UDP-N-acetyl-alpha-D-glucosamine + diphosphate. It participates in nucleotide-sugar biosynthesis; UDP-N-acetyl-alpha-D-glucosamine biosynthesis; N-acetyl-alpha-D-glucosamine 1-phosphate from alpha-D-glucosamine 6-phosphate (route II): step 2/2. It functions in the pathway nucleotide-sugar biosynthesis; UDP-N-acetyl-alpha-D-glucosamine biosynthesis; UDP-N-acetyl-alpha-D-glucosamine from N-acetyl-alpha-D-glucosamine 1-phosphate: step 1/1. The protein operates within bacterial outer membrane biogenesis; LPS lipid A biosynthesis. Its function is as follows. Catalyzes the last two sequential reactions in the de novo biosynthetic pathway for UDP-N-acetylglucosamine (UDP-GlcNAc). The C-terminal domain catalyzes the transfer of acetyl group from acetyl coenzyme A to glucosamine-1-phosphate (GlcN-1-P) to produce N-acetylglucosamine-1-phosphate (GlcNAc-1-P), which is converted into UDP-GlcNAc by the transfer of uridine 5-monophosphate (from uridine 5-triphosphate), a reaction catalyzed by the N-terminal domain. The sequence is that of Bifunctional protein GlmU from Hahella chejuensis (strain KCTC 2396).